A 349-amino-acid polypeptide reads, in one-letter code: CCN family member 2 (349 aa).

Residues 1 to 26 (MTAASMGPVRVAFVVLLALCSRPAVG) form the signal peptide. The 72-residue stretch at 27–98 (QNCSGPCRCP…NRKIGVCTAK (72 aa)) folds into the IGFBP N-terminal domain. N-linked (GlcNAc...) asparagine glycosylation occurs at N28. 6 disulfides stabilise this stretch: C29–C54, C33–C56, C35–C57, C43–C60, C68–C82, and C74–C95. One can recognise a VWFC domain in the interval 101–167 (APCIFGGTVY…GKCCEEWVCD (67 aa)). The region spanning 198 to 243 (NCLVQTTEWSACSKTCGMGISTRVTNDNASCRLEKQSRLCMVRPCE) is the TSP type-1 domain. N225 is a glycosylation site (N-linked (GlcNAc...) asparagine). The tract at residues 247–349 (EENIKKGKKC…YYRKMYGDMA (103 aa)) is heparin-binding. Intrachain disulfides connect C256–C293, C273–C307, C284–C323, C287–C325, and C292–C329. Residues 256–330 (CIRTPKISKP…KTCACHYNCP (75 aa)) form the CTCK domain.

Belongs to the CCN family. In terms of assembly, monomer. Interacts with TSKU. As to expression, expressed in bone marrow and thymic cells. Also expressed one of two Wilms tumors tested.

It is found in the secreted. The protein localises to the extracellular space. It localises to the extracellular matrix. Major connective tissue mitoattractant secreted by vascular endothelial cells. Promotes proliferation and differentiation of chondrocytes. Is involved in the stimulation of osteoblast differentiation and has a critical role in osteogenesis. Mediates heparin- and divalent cation-dependent cell adhesion in many cell types including fibroblasts, myofibroblasts, endothelial and epithelial cells. Enhances fibroblast growth factor-induced DNA synthesis. The chain is CCN family member 2 from Homo sapiens (Human).